The sequence spans 397 residues: Probable transport protein MmpL6 (397 aa).

5 consecutive transmembrane segments (helical) span residues 190–210 (YDLL…MMII), 214–234 (LVAA…SFGL), 242–262 (LLGI…LLAV), 293–313 (TGGV…SFVF), and 328–348 (LGLL…IAVL).

The protein belongs to the resistance-nodulation-cell division (RND) (TC 2.A.6) family. MmpL subfamily.

The protein resides in the cell membrane. This is Probable transport protein MmpL6 (mmpL6) from Mycobacterium tuberculosis (strain CDC 1551 / Oshkosh).